The sequence spans 380 residues: Cytochrome b (380 aa).

The next 4 membrane-spanning stretches (helical) occupy residues 34-54, 78-99, 114-134, and 179-199; these read FGSL…LLAT, WLIR…YLHI, WNTG…GYVL, and FFAL…IHLT. Heme b-binding residues include His-84 and His-98. Positions 183 and 197 each coordinate heme b. His-202 is a binding site for a ubiquinone. Helical transmembrane passes span 227–247, 289–309, 321–341, and 348–368; these read LKDI…ALFS, LGGV…PLLH, LSQL…WVGS, and FIII…ILFP.

This sequence belongs to the cytochrome b family. The cytochrome bc1 complex contains 11 subunits: 3 respiratory subunits (MT-CYB, CYC1 and UQCRFS1), 2 core proteins (UQCRC1 and UQCRC2) and 6 low-molecular weight proteins (UQCRH/QCR6, UQCRB/QCR7, UQCRQ/QCR8, UQCR10/QCR9, UQCR11/QCR10 and a cleavage product of UQCRFS1). This cytochrome bc1 complex then forms a dimer. It depends on heme b as a cofactor.

The protein localises to the mitochondrion inner membrane. Its function is as follows. Component of the ubiquinol-cytochrome c reductase complex (complex III or cytochrome b-c1 complex) that is part of the mitochondrial respiratory chain. The b-c1 complex mediates electron transfer from ubiquinol to cytochrome c. Contributes to the generation of a proton gradient across the mitochondrial membrane that is then used for ATP synthesis. The chain is Cytochrome b (MT-CYB) from Ciconia ciconia (White stork).